We begin with the raw amino-acid sequence, 113 residues long: Putative pterin-4-alpha-carbinolamine dehydratase (113 aa).

This sequence belongs to the pterin-4-alpha-carbinolamine dehydratase family.

The catalysed reaction is (4aS,6R)-4a-hydroxy-L-erythro-5,6,7,8-tetrahydrobiopterin = (6R)-L-erythro-6,7-dihydrobiopterin + H2O. The chain is Putative pterin-4-alpha-carbinolamine dehydratase from Pelodictyon phaeoclathratiforme (strain DSM 5477 / BU-1).